A 357-amino-acid polypeptide reads, in one-letter code: Mannonate dehydratase (357 aa).

The protein belongs to the mannonate dehydratase family. Fe(2+) is required as a cofactor. Mn(2+) serves as cofactor.

It carries out the reaction D-mannonate = 2-dehydro-3-deoxy-D-gluconate + H2O. The protein operates within carbohydrate metabolism; pentose and glucuronate interconversion. Functionally, catalyzes the dehydration of D-mannonate. The polypeptide is Mannonate dehydratase (Sorangium cellulosum (strain So ce56) (Polyangium cellulosum (strain So ce56))).